Consider the following 119-residue polypeptide: Beta-2-microglobulin (119 aa).

The signal sequence occupies residues 1-20 (MACSVVVALLALLSLSGLEA). Residues 25-114 (PKIQVYSRHP…VTFSTPKTVK (90 aa)) enclose the Ig-like C1-type domain. C45 and C100 are oxidised to a cystine.

It belongs to the beta-2-microglobulin family. In terms of assembly, heterodimer of an alpha chain and a beta chain. Beta-2-microglobulin is the beta-chain of major histocompatibility complex class I molecules.

It localises to the secreted. Functionally, component of the class I major histocompatibility complex (MHC). Involved in the presentation of peptide antigens to the immune system. In Mico emiliae (Emilia's marmoset), this protein is Beta-2-microglobulin (B2M).